Reading from the N-terminus, the 710-residue chain is Pentatricopeptide repeat-containing protein At5g39680 (710 aa).

At Ser2 the chain carries N-acetylserine. 14 PPR repeats span residues 35–64 (NELL…NQSS), 68–98 (DAYQ…MPER), 99–133 (NVVS…GESR), 135–169 (NEFV…GLIS), 170–200 (HEFV…LPYC), 201–235 (DLSV…DFVW), 236–270 (NNLT…GFNA), 271–301 (EVEA…THAQ), 302–336 (NIFL…EVPP), 337–371 (NEYT…GYRN), 372–402 (HVMV…MTFR), 403–437 (DIVT…GEIP), 438–473 (NRIT…DVQP), and 474–504 (DIQH…APIE). Residues 509–584 (AWRTLLNACY…EPGVSWIGIR (76 aa)) form a type E motif region. Residues 585 to 615 (NQTHVFLAEDNQHPEITLIYAKVKEVMSKIK) form a type E(+) motif region. The interval 616–710 (PLGYSPDVAG…DGQCSCCDYW (95 aa)) is type DYW motif.

Belongs to the PPR family. PCMP-H subfamily.

This is Pentatricopeptide repeat-containing protein At5g39680 (EMB2744) from Arabidopsis thaliana (Mouse-ear cress).